The sequence spans 484 residues: tRNA sulfurtransferase (484 aa).

The THUMP domain occupies 61–165; sequence PLILDLLKRT…GDKMLLVEAR (105 aa). Residues 183 to 184, Lys265, Gly287, and Gln296 contribute to the ATP site; that span reads LI. Cys344 and Cys456 form a disulfide bridge. Residues 404–483 form the Rhodanese domain; it reads LTEKDIILDI…YQNVKVFNLP (80 aa). Catalysis depends on Cys456, which acts as the Cysteine persulfide intermediate.

Belongs to the ThiI family.

The protein resides in the cytoplasm. The catalysed reaction is [ThiI sulfur-carrier protein]-S-sulfanyl-L-cysteine + a uridine in tRNA + 2 reduced [2Fe-2S]-[ferredoxin] + ATP + H(+) = [ThiI sulfur-carrier protein]-L-cysteine + a 4-thiouridine in tRNA + 2 oxidized [2Fe-2S]-[ferredoxin] + AMP + diphosphate. It carries out the reaction [ThiS sulfur-carrier protein]-C-terminal Gly-Gly-AMP + S-sulfanyl-L-cysteinyl-[cysteine desulfurase] + AH2 = [ThiS sulfur-carrier protein]-C-terminal-Gly-aminoethanethioate + L-cysteinyl-[cysteine desulfurase] + A + AMP + 2 H(+). It participates in cofactor biosynthesis; thiamine diphosphate biosynthesis. Functionally, catalyzes the ATP-dependent transfer of a sulfur to tRNA to produce 4-thiouridine in position 8 of tRNAs, which functions as a near-UV photosensor. Also catalyzes the transfer of sulfur to the sulfur carrier protein ThiS, forming ThiS-thiocarboxylate. This is a step in the synthesis of thiazole, in the thiamine biosynthesis pathway. The sulfur is donated as persulfide by IscS. The sequence is that of tRNA sulfurtransferase from Haemophilus ducreyi (strain 35000HP / ATCC 700724).